We begin with the raw amino-acid sequence, 117 residues long: Large ribosomal subunit protein bL19 (117 aa).

The protein belongs to the bacterial ribosomal protein bL19 family.

In terms of biological role, this protein is located at the 30S-50S ribosomal subunit interface and may play a role in the structure and function of the aminoacyl-tRNA binding site. This Photorhabdus laumondii subsp. laumondii (strain DSM 15139 / CIP 105565 / TT01) (Photorhabdus luminescens subsp. laumondii) protein is Large ribosomal subunit protein bL19.